The sequence spans 72 residues: Cytotoxin 9 (72 aa).

Positions 1-12 are cleaved as a signal peptide; it reads VVTIVCLDLGYT. Intrachain disulfides connect Cys-15–Cys-33, Cys-26–Cys-50, Cys-54–Cys-65, and Cys-66–Cys-71.

It belongs to the three-finger toxin family. Short-chain subfamily. Type IA cytotoxin sub-subfamily. Monomer in solution; Homodimer and oligomer in the presence of negatively charged lipids forming a pore with a size ranging between 20 and 30 Angstroms. As to expression, expressed by the venom gland.

The protein localises to the secreted. Functionally, shows cytolytic activity on many different cells by forming a pore in lipid membranes. In vivo, increases heart rate or kills the animal by cardiac arrest. In addition, it binds to heparin with high affinity, interacts with Kv channel-interacting protein 1 (KCNIP1) in a calcium-independent manner, and binds to integrin alpha-V/beta-3 (ITGAV/ITGB3) with moderate affinity. Preferentially binds acidic phospholipids like phosphatidylserine, phosphatidic acid and phosphatidyl glycerol. Has hemolytic activity towards human erythrocytes (EC(50)=0.171 uM) and cytolytic activity towards various cell lines. In Naja naja (Indian cobra), this protein is Cytotoxin 9.